Consider the following 260-residue polypeptide: 23S rRNA (guanosine-2'-O-)-methyltransferase RlmB (260 aa).

3 residues coordinate S-adenosyl-L-methionine: glycine 197, isoleucine 217, and leucine 226.

It belongs to the class IV-like SAM-binding methyltransferase superfamily. RNA methyltransferase TrmH family. RlmB subfamily.

It is found in the cytoplasm. The enzyme catalyses guanosine(2251) in 23S rRNA + S-adenosyl-L-methionine = 2'-O-methylguanosine(2251) in 23S rRNA + S-adenosyl-L-homocysteine + H(+). Its function is as follows. Specifically methylates the ribose of guanosine 2251 in 23S rRNA. This chain is 23S rRNA (guanosine-2'-O-)-methyltransferase RlmB, found in Nitrosomonas europaea (strain ATCC 19718 / CIP 103999 / KCTC 2705 / NBRC 14298).